The following is a 466-amino-acid chain: Soluble pyridine nucleotide transhydrogenase (466 aa).

Glu36–Cys45 lines the FAD pocket.

It belongs to the class-I pyridine nucleotide-disulfide oxidoreductase family. It depends on FAD as a cofactor.

It is found in the cytoplasm. The enzyme catalyses NAD(+) + NADPH = NADH + NADP(+). Its function is as follows. Conversion of NADPH, generated by peripheral catabolic pathways, to NADH, which can enter the respiratory chain for energy generation. The chain is Soluble pyridine nucleotide transhydrogenase from Salmonella paratyphi C (strain RKS4594).